A 492-amino-acid chain; its full sequence is Glutamyl-tRNA(Gln) amidotransferase subunit A (492 aa).

Active-site charge relay system residues include Lys-78 and Ser-158. Ser-182 serves as the catalytic Acyl-ester intermediate.

The protein belongs to the amidase family. GatA subfamily. As to quaternary structure, heterotrimer of A, B and C subunits.

The catalysed reaction is L-glutamyl-tRNA(Gln) + L-glutamine + ATP + H2O = L-glutaminyl-tRNA(Gln) + L-glutamate + ADP + phosphate + H(+). In terms of biological role, allows the formation of correctly charged Gln-tRNA(Gln) through the transamidation of misacylated Glu-tRNA(Gln) in organisms which lack glutaminyl-tRNA synthetase. The reaction takes place in the presence of glutamine and ATP through an activated gamma-phospho-Glu-tRNA(Gln). The protein is Glutamyl-tRNA(Gln) amidotransferase subunit A of Zymomonas mobilis subsp. mobilis (strain ATCC 31821 / ZM4 / CP4).